The following is a 619-amino-acid chain: DNA mismatch repair protein MutL (619 aa).

Residues 364–375 show a composition bias toward low complexity; the sequence is EPASAREPAAPR. Residues 364–399 form a disordered region; sequence EPASAREPAAPRYSTSSGATGGRQPAASWPHAQPGY.

Belongs to the DNA mismatch repair MutL/HexB family.

In terms of biological role, this protein is involved in the repair of mismatches in DNA. It is required for dam-dependent methyl-directed DNA mismatch repair. May act as a 'molecular matchmaker', a protein that promotes the formation of a stable complex between two or more DNA-binding proteins in an ATP-dependent manner without itself being part of a final effector complex. The protein is DNA mismatch repair protein MutL of Citrobacter koseri (strain ATCC BAA-895 / CDC 4225-83 / SGSC4696).